A 274-amino-acid polypeptide reads, in one-letter code: Anamorsin homolog (274 aa).

The segment at 1 to 154 (MDRTRKQCSV…KKPSWKIGSS (154 aa)) is N-terminal SAM-like domain. The linker stretch occupies residues 154 to 185 (SFALKKSTKGSVKVNLDDDLIDEDSLLTEEDM). Residues C196, C205, C208, and C210 each contribute to the [2Fe-2S] cluster site. Positions 196-210 (CEVGSTRKACKNCTC) are fe-S binding site A. 4 residues coordinate [4Fe-4S] cluster: C235, C238, C246, and C249. 2 consecutive short sequence motifs (cx2C motif) follow at residues 235–238 (CGSC) and 246–249 (CSTC). The fe-S binding site B stretch occupies residues 235–249 (CGSCGLGDAFRCSTC).

It belongs to the anamorsin family. As to quaternary structure, monomer. The cofactor is [2Fe-2S] cluster. [4Fe-4S] cluster serves as cofactor.

The protein resides in the cytoplasm. Its subcellular location is the mitochondrion intermembrane space. In terms of biological role, component of the cytosolic iron-sulfur (Fe-S) protein assembly (CIA) machinery. Required for the maturation of extramitochondrial Fe-S proteins. Part of an electron transfer chain functioning in an early step of cytosolic Fe-S biogenesis, facilitating the de novo assembly of a [4Fe-4S] cluster on the cytosolic Fe-S scaffold complex. Electrons are transferred from NADPH via a FAD- and FMN-containing diflavin oxidoreductase. Together with the diflavin oxidoreductase, also required for the assembly of the diferric tyrosyl radical cofactor of ribonucleotide reductase (RNR), probably by providing electrons for reduction during radical cofactor maturation in the catalytic small subunit. The protein is Anamorsin homolog of Ricinus communis (Castor bean).